Here is a 213-residue protein sequence, read N- to C-terminus: Large ribosomal subunit protein uL3 (213 aa).

This sequence belongs to the universal ribosomal protein uL3 family. As to quaternary structure, part of the 50S ribosomal subunit. Forms a cluster with proteins L14 and L19.

Functionally, one of the primary rRNA binding proteins, it binds directly near the 3'-end of the 23S rRNA, where it nucleates assembly of the 50S subunit. The protein is Large ribosomal subunit protein uL3 of Bifidobacterium longum (strain DJO10A).